The primary structure comprises 329 residues: Glyceraldehyde-3-phosphate dehydrogenase 1 (329 aa).

Residues 11–12, D33, and K78 each bind NAD(+); that span reads RI. Residues 148–150, T179, 208–209, and R231 each bind D-glyceraldehyde 3-phosphate; these read SCT and TG. Catalysis depends on C149, which acts as the Nucleophile. An NAD(+)-binding site is contributed by N313.

This sequence belongs to the glyceraldehyde-3-phosphate dehydrogenase family. Homotetramer.

The protein resides in the cytoplasm. It carries out the reaction D-glyceraldehyde 3-phosphate + phosphate + NAD(+) = (2R)-3-phospho-glyceroyl phosphate + NADH + H(+). It participates in carbohydrate degradation; glycolysis; pyruvate from D-glyceraldehyde 3-phosphate: step 1/5. The chain is Glyceraldehyde-3-phosphate dehydrogenase 1 (GAP1) from Kluyveromyces lactis (strain ATCC 8585 / CBS 2359 / DSM 70799 / NBRC 1267 / NRRL Y-1140 / WM37) (Yeast).